Consider the following 815-residue polypeptide: Echinoderm microtubule-associated protein-like 1 (815 aa).

Residues 31–72 (SMEVTDRIASLEQRVQMQEDDIQLLKSALADVVRRLNITEEQ) are a coiled coil. Residues 77 to 179 (NRKGPTKARP…NSESKPKEPV (103 aa)) form a disordered region. Residues 92 to 101 (PLRTTVNNGT) are compositionally biased toward polar residues. Residue S113 is modified to Phosphoserine. Polar residues predominate over residues 126–138 (TKSNIKRTSSSER). Basic and acidic residues predominate over residues 143-153 (GRRESNGDSRG). The span at 156 to 168 (NRTGSTSSSSSGK) shows a compositional bias: low complexity. The tandem atypical propeller in EMLs stretch occupies residues 176–815 (KEPVFSAEEG…DTSIMQWRVI (640 aa)). WD repeat units lie at residues 261-310 (EQLQ…IWDS), 315-358 (TLHV…VWDW), 363-400 (KLADVKCSNEAVFAADFHPTDTNIIVTCGKSHLYFWTL), 409-446 (QGLFEKQEKPKFVLCVTFSENGDTITGDSSGNILVWGK), 450-489 (RISYAVQGAHEGGIFALCMLRDGTLVSGGGKDRKLISWSG), 493-530 (KLRKTEIPEQFGPIRTVAEGKGDVILIGTTRNFVLQGT), 535-572 (FTPITQGHTDELWGLAIHASKSQFLTCGHDKHATLWDA), 578-613 (VWDKIIEDPAQSSGFHPSGSVVAVGTLTGRWFVFDT), 617-655 (DLVTVHTDGNEQLSVMRYSPDGNFLAIGSHDNCIYIYGV), 664-701 (RVGKCSGHSSFITHLDWSVNSQFLVSNSGDYEILYWVP), 709-768 (SVET…LFSY), and 775-814 (APSHIYGGHSSHVTNVDFLCEDSHLISTGGKDTSIMQWRV).

Belongs to the WD repeat EMAP family. In terms of assembly, homotrimer; self-association is mediated by the N-terminal coiled coil. Does not interact with EML3. Binds repolymerizing microtubules. Binds unpolymerized tubulins via its WD repeat region. Interacts with TASOR. Ubiquitous; expressed in most tissues with the exception of thymus and peripheral blood lymphocytes.

The protein localises to the cytoplasm. Its subcellular location is the perinuclear region. It localises to the cytoskeleton. In terms of biological role, modulates the assembly and organization of the microtubule cytoskeleton, and probably plays a role in regulating the orientation of the mitotic spindle and the orientation of the plane of cell division. Required for normal proliferation of neuronal progenitor cells in the developing brain and for normal brain development. Does not affect neuron migration per se. The chain is Echinoderm microtubule-associated protein-like 1 (EML1) from Homo sapiens (Human).